Here is a 372-residue protein sequence, read N- to C-terminus: NAD(P)H-quinone oxidoreductase subunit 1 (372 aa).

Helical transmembrane passes span 27-47, 97-117, 128-148, 176-196, 204-224, 266-286, 308-328, and 347-367; these read IIWLPIPMLLVLVAAVVGVLV, ILFTAGPILVLVPVILSWLIV, VGIGIFLWIALSSIQPIGLLM, LALSVLAIVLMTNSLSTIDIV, ILSWNIWRQPVGFIVFWICAL, ILSALLVSILYLGGWGFPIPV, SIGIVMTVLKAYLLVFIAILL, and FLLPISLANLLITAGLKLAFP.

Belongs to the complex I subunit 1 family. In terms of assembly, NDH-1 is composed of at least 11 different subunits.

The protein resides in the cellular thylakoid membrane. The catalysed reaction is a plastoquinone + NADH + (n+1) H(+)(in) = a plastoquinol + NAD(+) + n H(+)(out). The enzyme catalyses a plastoquinone + NADPH + (n+1) H(+)(in) = a plastoquinol + NADP(+) + n H(+)(out). NDH-1 shuttles electrons from an unknown electron donor, via FMN and iron-sulfur (Fe-S) centers, to quinones in the respiratory and/or the photosynthetic chain. The immediate electron acceptor for the enzyme in this species is believed to be plastoquinone. Couples the redox reaction to proton translocation, and thus conserves the redox energy in a proton gradient. This chain is NAD(P)H-quinone oxidoreductase subunit 1, found in Prochlorococcus marinus (strain MIT 9312).